Consider the following 251-residue polypeptide: E3 ubiquitin-protein ligase Os06g0535400 (251 aa).

3 consecutive transmembrane segments (helical) span residues 28-48 (VVAA…YCFA), 102-122 (LANR…IVVF), and 127-147 (ADVV…VWLS). The segment at 185-227 (CCVCLAGMREAQALRDLPRCGHRFHAKCIGKWLTAHPTCPVCR) adopts an RING-type; atypical zinc-finger fold.

It is found in the membrane. It catalyses the reaction S-ubiquitinyl-[E2 ubiquitin-conjugating enzyme]-L-cysteine + [acceptor protein]-L-lysine = [E2 ubiquitin-conjugating enzyme]-L-cysteine + N(6)-ubiquitinyl-[acceptor protein]-L-lysine.. It functions in the pathway protein modification; protein ubiquitination. Possesses E3 ubiquitin-protein ligase in vitro. The polypeptide is E3 ubiquitin-protein ligase Os06g0535400 (Oryza sativa subsp. japonica (Rice)).